A 421-amino-acid chain; its full sequence is Testin (421 aa).

One can recognise a PET domain in the interval 92 to 199 (MILTNPVAAK…GDVKLPCEMD (108 aa)). LIM zinc-binding domains are found at residues 234–297 (YSCY…CDSE), 299–359 (PRCA…NHAV), and 362–421 (QGCH…KRMS).

This sequence belongs to the prickle / espinas / testin family. In terms of assembly, interacts via LIM domain 1 with ZYX. Interacts (via LIM domain 3) with ENAH and VASP. Interacts with ALKBH4, talin, actin, alpha-actinin, GRIP1 and PXN. Interacts (via LIM domain 2) with ACTL7A (via N-terminus). Heterodimer with ACTL7A; the heterodimer interacts with ENAH to form a heterotrimer.

It is found in the cytoplasm. The protein localises to the cell junction. Its subcellular location is the focal adhesion. Functionally, scaffold protein that may play a role in cell adhesion, cell spreading and in the reorganization of the actin cytoskeleton. Plays a role in the regulation of cell proliferation. May act as a tumor suppressor. This Nomascus leucogenys (Northern white-cheeked gibbon) protein is Testin (TES).